The chain runs to 264 residues: Spermidine/putrescine transport system permease protein PotC (264 aa).

Over M1–R7 the chain is Cytoplasmic. A helical membrane pass occupies residues G8–V27. Residues N28–T65 are Periplasmic-facing. In terms of domain architecture, ABC transmembrane type-1 spans A60–S248. The helical transmembrane segment at M66–L85 threads the bilayer. The Cytoplasmic segment spans residues Y86–L100. The chain crosses the membrane as a helical span at residues F101 to M120. Topologically, residues L121–F128 are periplasmic. A helical membrane pass occupies residues W129 to Y148. Residues S149–I176 are Cytoplasmic-facing. Residues I177–S196 traverse the membrane as a helical segment. At M197 to N231 the chain is on the periplasmic side. Residues A232–I251 traverse the membrane as a helical segment. Residues A252–K264 are Cytoplasmic-facing.

It belongs to the binding-protein-dependent transport system permease family. CysTW subfamily.

Its subcellular location is the cell inner membrane. In terms of biological role, required for the activity of the bacterial periplasmic transport system of putrescine and spermidine. The chain is Spermidine/putrescine transport system permease protein PotC (potC) from Escherichia coli O157:H7.